Reading from the N-terminus, the 46-residue chain is Defensin-1 (46 aa).

4 disulfides stabilise this stretch: cysteine 3–cysteine 46, cysteine 14–cysteine 35, cysteine 20–cysteine 40, and cysteine 24–cysteine 42.

The protein belongs to the DEFL family. Epidermis and vascular bundles of pods, stems, roots, leaves and wet or dry seeds.

Its function is as follows. Possesses antifungal activity sensitive to inorganic cations. This chain is Defensin-1, found in Pisum sativum (Garden pea).